The sequence spans 234 residues: Putative methyltransferase-like protein 15P1 (234 aa).

Residues 100 to 102 (GGH), Asp119, Phe146, Asp169, and Gln176 each bind S-adenosyl-L-methionine.

The protein belongs to the methyltransferase superfamily. RsmH family.

Its function is as follows. Probable S-adenosyl-L-methionine-dependent methyltransferase. The chain is Putative methyltransferase-like protein 15P1 (METTL15P1) from Homo sapiens (Human).